Here is a 222-residue protein sequence, read N- to C-terminus: Zinc finger C2HC domain-containing protein 1B (222 aa).

A C2HC/C3H-type 1 zinc finger spans residues 14 to 43 (ELFPCEVCGRRFAADVLERHGPICKKLFNR). 4 residues coordinate Zn(2+): cysteine 18, cysteine 21, histidine 33, and cysteine 37. The tract at residues 48–78 (FSSLKQRLQGTDIPTVKKTPQSKSPPVRKSN) is disordered. The C2HC/C3H-type 2; degenerate zinc finger occupies 117–146 (DYIQRPYCMRRFNESAAERHTNFCKDQSSR). The segment at 196–222 (PTKSGLAMDPASGAKLRQGFSKSSKKD) is disordered.

It belongs to the ZC2HC1 family. Requires Zn(2+) as cofactor.

This chain is Zinc finger C2HC domain-containing protein 1B (ZC2HC1B), found in Homo sapiens (Human).